Here is a 1356-residue protein sequence, read N- to C-terminus: Vegetative incompatibility protein HET-E-1 (1356 aa).

Residues 294–629 enclose the NACHT domain; it reads RLLWINGDPG…DFLLGTASDK (336 aa). Residue 300–307 participates in GTP binding; that stretch reads GDPGKGKT. WD repeat units follow at residues 839 to 869, 881 to 911, 923 to 953, 965 to 995, 1007 to 1037, 1049 to 1079, 1091 to 1121, 1133 to 1163, 1175 to 1205, and 1217 to 1247; these read GHGS…KIWD, GHGG…KIWD, and GHGD…KIWD.

In terms of biological role, responsible for vegetative incompatibility through specific interactions with different alleles of the unlinked gene, het-c. The polypeptide is Vegetative incompatibility protein HET-E-1 (HET-E1) (Podospora anserina (Pleurage anserina)).